A 67-amino-acid polypeptide reads, in one-letter code: uncharacterized protein (67 aa).

To E.coli YbdD.

This is an uncharacterized protein from Escherichia coli O157:H7.